The primary structure comprises 277 residues: Putative ankyrin repeat protein L81 (277 aa).

ANK repeat units follow at residues 150–179 and 183–215; these read FGQT…DLHQ and QGRS…DLYQ.

The protein is Putative ankyrin repeat protein L81 of Acanthamoeba polyphaga (Amoeba).